The following is a 261-amino-acid chain: Undecaprenyl-diphosphatase (261 aa).

8 helical membrane passes run 16–36, 40–60, 82–102, 107–127, 140–160, 183–203, 211–231, and 239–259; these read TEFL…LFGF, GLVF…VYFW, FWFL…LEDI, LRAP…LYLA, IRFG…IPGV, FSFL…MLKM, SFVL…WFLI, and FNIF…IALL.

Belongs to the UppP family.

It localises to the cell membrane. It catalyses the reaction di-trans,octa-cis-undecaprenyl diphosphate + H2O = di-trans,octa-cis-undecaprenyl phosphate + phosphate + H(+). Its function is as follows. Catalyzes the dephosphorylation of undecaprenyl diphosphate (UPP). Confers resistance to bacitracin. This Desulforudis audaxviator (strain MP104C) protein is Undecaprenyl-diphosphatase.